A 493-amino-acid chain; its full sequence is Putative BTB/POZ domain-containing protein L35 (493 aa).

A BTB domain is found at Thr16 to Asp87.

The protein belongs to the mimivirus BTB/WD family.

This is Putative BTB/POZ domain-containing protein L35 from Acanthamoeba polyphaga (Amoeba).